The primary structure comprises 525 residues: NAD(P)H-quinone oxidoreductase subunit 2 (525 aa).

14 helical membrane passes run 14 to 34 (AIWPEVVVTLTLLIVLVVDLV), 42 to 62 (SLPALSLFGLLGALVTLVLQW), 78 to 98 (PVSILFRGLVVATAALTVMMA), 117 to 137 (LTATLGGMFLAGATDLIMVFV), 167 to 187 (LLTGASSTAIFLYGMSLLYGL), 201 to 221 (LANAGLVGILALVFCLGGIGF), 240 to 260 (PTPVVAFLSVGSKAAGFALAI), 276 to 296 (AVLSVLAILTMVLGNVVAIAQ), 302 to 322 (LLAYSSIGQAGFVLIGLVAGT), 330 to 350 (IFYLMVYLAMNLGAFLCVTLF), 374 to 394 (LCLSICLLSLGGLPPLAGFFG), 396 to 416 (LYLFWAGWQAGEYTLVLVGLV), 462 to 482 (VGMVVTLVATIFAGILSNPLF), and 494 to 514 (FLGFPTAQAFAPGSASPSLAV).

It belongs to the complex I subunit 2 family. As to quaternary structure, NDH-1 can be composed of about 15 different subunits; different subcomplexes with different compositions have been identified which probably have different functions.

The protein localises to the cellular thylakoid membrane. The enzyme catalyses a plastoquinone + NADH + (n+1) H(+)(in) = a plastoquinol + NAD(+) + n H(+)(out). It carries out the reaction a plastoquinone + NADPH + (n+1) H(+)(in) = a plastoquinol + NADP(+) + n H(+)(out). In terms of biological role, NDH-1 shuttles electrons from an unknown electron donor, via FMN and iron-sulfur (Fe-S) centers, to quinones in the respiratory and/or the photosynthetic chain. The immediate electron acceptor for the enzyme in this species is believed to be plastoquinone. Couples the redox reaction to proton translocation, and thus conserves the redox energy in a proton gradient. Cyanobacterial NDH-1 also plays a role in inorganic carbon-concentration. The sequence is that of NAD(P)H-quinone oxidoreductase subunit 2 from Synechococcus sp. (strain JA-3-3Ab) (Cyanobacteria bacterium Yellowstone A-Prime).